Consider the following 363-residue polypeptide: Trans-2,3-enoyl-CoA reductase-like (363 aa).

Residue Ser37 is modified to Phosphoserine. 3 consecutive transmembrane segments (helical) span residues 143 to 163 (WTTVFLAEYTGPLLIYLLFYL), 217 to 237 (LIMSCAFYWGFTSWIAYYINH), and 311 to 331 (ISFTVMTQTLPVGIFTLLMSI).

Belongs to the steroid 5-alpha reductase family. Predominantly expressed in the heart and skeletal muscle.

It localises to the membrane. It is found in the endoplasmic reticulum. This Homo sapiens (Human) protein is Trans-2,3-enoyl-CoA reductase-like (TECRL).